The sequence spans 935 residues: MTELKAKGPRAPHVAGSPSSPKVGSPLPCSQAAGPFPGSQTSDTLPEASALPISLDGLLFPRICQGQDPTDEKTQDQQSLSDVZGAYSRVEATRGAGGSSSRPPEKDSGLLDSVLDTLWEPSGPGQSQPSPPACEVTSSWCLFGPELPEDPPAAPATQRVLSPLMSRSGGKAGDSSGMAAAHKVLPRGLSPSRQLLLPTSGSPHWSGAPVKPSPQPAAVEVEEEDGSESEDSAGPLLKGKPRALGGAAAGGGVAAVPPGAAAGGLSLVPKEDSRFSAPRVALVEQDAPMAPGRSPLATTVTDFIHVPILPLSHALLAARTRQLLEDESYDGGAGAASAFAPPRSSPSASSTPVPGGDFPDCAYAPEAEPKDDAYPLYGDFQPPALKIKEEEEGAEASARSPRSYLVAGASPAAFPDFPLGPPPSLPPRAPPPRPGEAAVTAAPASASVSSASSSGSTLECILYKAEGAPSQQGQFAPPPCKAPGAGGCLLPRDSLPSTSASAAATAAGAAPGLYPALGLNGLPQLGYQAAVLKEGLPQVYPPYLNYLRPDSEASQSPQYSFESLPQKICLICGDEASGCHYGVLTCGSCKVFFKRAMEGQHNYLCAGRNDCIVDKIRRKNCPACRLRKCCQAGMVLGGRKFKKFNKVRVMRALDAVALPQPVGIPNENQALSQRFTFSPSQDIQLIPPLINLLLSIEPDVIFAGHDNTKPDTSSSLLTSLNQLGERQLLSVVKWSKSLPGFRNLHIDDQITLIQYSWMSLMVFGLGWRSYKHVSGQMLYFAPDLILNEQRMKESSFYSLCLTMWQIPQEFVKLQVSQEEFLCMKVLLLLNTIPLEGLRSQTQFEEMRSSYIRELIKAIGLRQKGVVSSSQRFYQLTKLLDNLHDLVKQLHLYCLNTFIQSRALSVEFPEMMSEVIAAQLPKILAGMVKPLLFHKK.

Positions 1 to 50 (MTELKAKGPRAPHVAGSPSSPKVGSPLPCSQAAGPFPGSQTSDTLPEASA) are disordered. The tract at residues 1 to 164 (MTELKAKGPR…PATQRVLSPL (164 aa)) is AF3; mediates transcriptional activation. Residues 1–568 (MTELKAKGPR…YSFESLPQKI (568 aa)) form a modulating, Pro-Rich region. The residue at position 20 (S20) is a Phosphoserine. The LXXL motif 1 signature appears at 55-59 (LDGLL). Residues 62 to 159 (RICQGQDPTD…DPPAAPATQR (98 aa)) form a disordered region. Position 81 is a phosphoserine (S81). An LXXL motif 2 motif is present at residues 115–119 (LDTLW). S130 and S162 each carry phosphoserine. Residues 165–305 (MSRSGGKAGD…LATTVTDFIH (141 aa)) are mediates transcriptional transrepression. Positions 183–187 (KVLPR) match the Nuclear localization signal motif. The interval 185 to 252 (LPRGLSPSRQ…ALGGAAAGGG (68 aa)) is disordered. A Phosphoserine modification is found at S190. The span at 191-203 (PSRQLLLPTSGSP) shows a compositional bias: polar residues. S213 is subject to Phosphoserine. Over residues 220 to 231 (EVEEEDGSESED) the composition is skewed to acidic residues. The segment covering 232 to 246 (SAGPLLKGKPRALGG) has biased composition (low complexity). Phosphoserine; by MAPK1 is present on S294. The tract at residues 331–365 (GGAGAASAFAPPRSSPSASSTPVPGGDFPDCAYAP) is disordered. Over residues 335–356 (AASAFAPPRSSPSASSTPVPGG) the composition is skewed to low complexity. The residue at position 345 (S345) is a Phosphoserine; by MAPK. K388 participates in a covalent cross-link: Glycyl lysine isopeptide (Lys-Gly) (interchain with G-Cter in SUMO); alternate. K388 is covalently cross-linked (Glycyl lysine isopeptide (Lys-Gly) (interchain with G-Cter in ubiquitin); alternate). Residue S400 is modified to Phosphoserine; by CDK2. Positions 415–452 (PDFPLGPPPSLPPRAPPPRPGEAAVTAAPASASVSSAS) are disordered. Residues 418–434 (PLGPPPSLPPRAPPPRP) show a composition bias toward pro residues. Positions 435–452 (GEAAVTAAPASASVSSAS) are enriched in low complexity. Positions 456-548 (STLECILYKA…VYPPYLNYLR (93 aa)) are AF1; mediates transcriptional activation. K533 is covalently cross-linked (Glycyl lysine isopeptide (Lys-Gly) (interchain with G-Cter in SUMO)). NR C4-type zinc fingers lie at residues 569–589 (CLIC…CGSC) and 605–629 (CAGR…LRKC). Residues 569–641 (CLICGDEASG…AGMVLGGRKF (73 aa)) constitute a DNA-binding region (nuclear receptor). Residue S678 is modified to Phosphoserine. An NR LBD domain is found at 681 to 915 (QDIQLIPPLI…EFPEMMSEVI (235 aa)). The AF2; mediates transcriptional activation stretch occupies residues 689–935 (LINLLLSIEP…MVKPLLFHKK (247 aa)).

The protein belongs to the nuclear hormone receptor family. Interacts with SMARD1 and UNC45A. Interacts with CUEDC2; the interaction promotes ubiquitination, decreases sumoylation, and represses transcriptional activity. Interacts with PIAS3; the interaction promotes sumoylation of PR in a hormone-dependent manner, inhibits DNA-binding, and alters nuclear export. Interacts with SP1; the interaction requires ligand-induced phosphorylation on Ser-344 by ERK1/2-MAPK. Interacts with PRMT2. Interacts with NCOA2 and NCOA1. Interacts with KLF9. Interacts with GTF2B. In terms of processing, phosphorylated on multiple serine sites. Several of these sites are hormone-dependent. Phosphorylation on Ser-294 is highly hormone-dependent and modulates ubiquitination and sumoylation on Lys-388. Phosphorylation on Ser-345 requires induction by hormone. Basal phosphorylation on Ser-81, Ser-162, Ser-190 and Ser-400 is increased in response to progesterone and can be phosphorylated in vitro by the CDK2-A1 complex. Increased levels of phosphorylation on Ser-400 also in the presence of EGF, heregulin, IGF, PMA and FBS. Phosphorylation at this site by CDK2 is ligand-independent, and increases nuclear translocation and transcriptional activity. Phosphorylation at Ser-162 and Ser-294, but not at Ser-190, is impaired during the G(2)/M phase of the cell cycle. Phosphorylation on Ser-345 by ERK1/2 MAPK is required for interaction with SP1. Post-translationally, sumoylation is hormone-dependent and represses transcriptional activity. Sumoylation on all three sites is enhanced by PIAS3. Desumoylated by SENP1. Sumoylation on Lys-388, the main site of sumoylation, is repressed by ubiquitination on the same site, and modulated by phosphorylation at Ser-294. Ubiquitination is hormone-dependent and represses sumoylation on the same site. Promoted by MAPK-mediated phosphorylation on Ser-294. In terms of processing, palmitoylated by ZDHHC7 and ZDHHC21. Palmitoylation is required for plasma membrane targeting and for rapid intracellular signaling via ERK and AKT kinases and cAMP generation.

The protein resides in the nucleus. Its subcellular location is the cytoplasm. Functionally, the steroid hormones and their receptors are involved in the regulation of eukaryotic gene expression and affect cellular proliferation and differentiation in target tissues. Transcriptional activator of several progesteron-dependent promoters in a variety of cell types. Involved in activation of SRC-dependent MAPK signaling on hormone stimulation. The polypeptide is Progesterone receptor (PGR) (Pithecia irrorata (Gray monk saki)).